The primary structure comprises 503 residues: Sugar phosphate exchanger 3 (503 aa).

A helical membrane pass occupies residues 20–40 (YTHHHLAAFLLTFFSYSLLHA). 2 N-linked (GlcNAc...) asparagine glycosylation sites follow: asparagine 62 and asparagine 71. The next 5 membrane-spanning stretches (helical) occupy residues 87–107 (TLFL…GLFI), 119–139 (LVLT…GTLT), 152–172 (LVWI…VAIM), 183–203 (FVFG…AFLA), and 214–234 (AFLV…FGLV). Asparagine 275 carries an N-linked (GlcNAc...) asparagine glycan. The next 6 membrane-spanning stretches (helical) occupy residues 300-322 (GVLL…FFWL), 342-362 (IWYD…SDLM), 367-387 (PVLT…SHSP), 395-415 (FIMS…SSAI), 437-457 (GIVD…VPLI), and 466-486 (VFYF…PLIV).

The protein belongs to the major facilitator superfamily. Organophosphate:Pi antiporter (OPA) (TC 2.A.1.4) family.

It is found in the endoplasmic reticulum membrane. The protein localises to the lysosome membrane. Functionally, unlike the other SLC37 members, seems to lack glucose-6-phosphate antiporter activity. This chain is Sugar phosphate exchanger 3 (slc37a3), found in Xenopus laevis (African clawed frog).